We begin with the raw amino-acid sequence, 74 residues long: Translation initiation factor IF-1 (74 aa).

The region spanning 1-72 (MSKQDLIEME…TKGRITYRLR (72 aa)) is the S1-like domain.

This sequence belongs to the IF-1 family. As to quaternary structure, component of the 30S ribosomal translation pre-initiation complex which assembles on the 30S ribosome in the order IF-2 and IF-3, IF-1 and N-formylmethionyl-tRNA(fMet); mRNA recruitment can occur at any time during PIC assembly.

It is found in the cytoplasm. Its function is as follows. One of the essential components for the initiation of protein synthesis. Stabilizes the binding of IF-2 and IF-3 on the 30S subunit to which N-formylmethionyl-tRNA(fMet) subsequently binds. Helps modulate mRNA selection, yielding the 30S pre-initiation complex (PIC). Upon addition of the 50S ribosomal subunit IF-1, IF-2 and IF-3 are released leaving the mature 70S translation initiation complex. The chain is Translation initiation factor IF-1 from Trichodesmium erythraeum (strain IMS101).